The primary structure comprises 497 residues: MSQAGSSPLYAAIDLGSNSFHMLVVRHIDGSVQTMAKIKRKVRLAAGLDEHNSLSMEAMQRGWDCLSLFAERLQDIPKQNIRIVGTATLRTATNVDVFLEKANQILGQPIEVITGEEEAATIYKGVAHTSGGSGRRLVVDIGGASTELIIGEGFEAKALTSLKMGCVTWLENFFKDRQLNARNFDAAIEGAKQTLMPILGQYTDLGWDVCVGASGTVQALQEIMLAQGMDEVITHSKLKRLQKQAMLADHLEELDIEGLTLERALVFPSGLSILIAIFEQLEIDAMTLAGGALREGLVYEMVDELRQNDIRARTIRSVQNRYQLDCQYGEQVAKLAGKLLEQVGGEAWVAEPQGKVLLKTTAKLHEIGLTIDFKKGGEHSAYLLQHLDLPGYTRAQKFFIGEIARRYREQLTSLPEQHALSGTSGKRVLRLLRLAVLLSHRRNPDLEPCVTLTAEGDKLTLSIDAKWLEANPLTAAELEIESNRQTDIGWPLSIVTC.

This sequence belongs to the GppA/Ppx family. GppA subfamily.

The catalysed reaction is guanosine 3'-diphosphate 5'-triphosphate + H2O = guanosine 3',5'-bis(diphosphate) + phosphate + H(+). The protein operates within purine metabolism; ppGpp biosynthesis; ppGpp from GTP: step 2/2. Catalyzes the conversion of pppGpp to ppGpp. Guanosine pentaphosphate (pppGpp) is a cytoplasmic signaling molecule which together with ppGpp controls the 'stringent response', an adaptive process that allows bacteria to respond to amino acid starvation, resulting in the coordinated regulation of numerous cellular activities. The sequence is that of Guanosine-5'-triphosphate,3'-diphosphate pyrophosphatase from Vibrio campbellii (strain ATCC BAA-1116).